The primary structure comprises 310 residues: N-acetyl-gamma-glutamyl-phosphate reductase (310 aa).

Cys117 is a catalytic residue.

The protein belongs to the NAGSA dehydrogenase family. Type 2 subfamily.

It localises to the cytoplasm. It carries out the reaction N-acetyl-L-glutamate 5-semialdehyde + phosphate + NADP(+) = N-acetyl-L-glutamyl 5-phosphate + NADPH + H(+). It participates in amino-acid biosynthesis; L-arginine biosynthesis; N(2)-acetyl-L-ornithine from L-glutamate: step 3/4. Functionally, catalyzes the NADPH-dependent reduction of N-acetyl-5-glutamyl phosphate to yield N-acetyl-L-glutamate 5-semialdehyde. The sequence is that of N-acetyl-gamma-glutamyl-phosphate reductase from Sinorhizobium medicae (strain WSM419) (Ensifer medicae).